The sequence spans 410 residues: Phosphoglycerate kinase (410 aa).

Substrate-binding positions include Asp-24–Asn-26, Arg-40, His-63–Arg-66, Arg-122, and Arg-162. ATP contacts are provided by residues Lys-212, Gly-300, Glu-331, and Gly-360–Ser-363.

The protein belongs to the phosphoglycerate kinase family. As to quaternary structure, monomer.

The protein localises to the cytoplasm. It catalyses the reaction (2R)-3-phosphoglycerate + ATP = (2R)-3-phospho-glyceroyl phosphate + ADP. It functions in the pathway carbohydrate degradation; glycolysis; pyruvate from D-glyceraldehyde 3-phosphate: step 2/5. This Nocardia farcinica (strain IFM 10152) protein is Phosphoglycerate kinase.